A 244-amino-acid chain; its full sequence is tRNA (guanine-N(1)-)-methyltransferase (244 aa).

S-adenosyl-L-methionine contacts are provided by residues glycine 112 and 131–136 (IGDFIV).

The protein belongs to the RNA methyltransferase TrmD family. As to quaternary structure, homodimer.

The protein localises to the cytoplasm. The catalysed reaction is guanosine(37) in tRNA + S-adenosyl-L-methionine = N(1)-methylguanosine(37) in tRNA + S-adenosyl-L-homocysteine + H(+). Functionally, specifically methylates guanosine-37 in various tRNAs. The polypeptide is tRNA (guanine-N(1)-)-methyltransferase (Clostridium kluyveri (strain NBRC 12016)).